Here is a 329-residue protein sequence, read N- to C-terminus: DNA-directed RNA polymerase subunit alpha (329 aa).

An alpha N-terminal domain (alpha-NTD) region spans residues 1–231 (MSILSFQMPE…KHFMLFSDQT (231 aa)). An alpha C-terminal domain (alpha-CTD) region spans residues 247–329 (EEFLHMRKLL…DTAKYKLDED (83 aa)).

It belongs to the RNA polymerase alpha chain family. As to quaternary structure, homodimer. The RNAP catalytic core consists of 2 alpha, 1 beta, 1 beta' and 1 omega subunit. When a sigma factor is associated with the core the holoenzyme is formed, which can initiate transcription.

The catalysed reaction is RNA(n) + a ribonucleoside 5'-triphosphate = RNA(n+1) + diphosphate. Functionally, DNA-dependent RNA polymerase catalyzes the transcription of DNA into RNA using the four ribonucleoside triphosphates as substrates. This Cytophaga hutchinsonii (strain ATCC 33406 / DSM 1761 / CIP 103989 / NBRC 15051 / NCIMB 9469 / D465) protein is DNA-directed RNA polymerase subunit alpha.